The following is a 433-amino-acid chain: Pyrimidine-nucleoside phosphorylase (433 aa).

Phosphate is bound at residue Lys-81–Ser-83. Residues Gly-88 and Thr-90 each contribute to the K(+) site. Phosphate is bound by residues Thr-92, Lys-108 to Ser-110, and Thr-120. Positions 168 and 187 each coordinate substrate. Residues Leu-243, Ala-246, and Glu-255 each contribute to the K(+) site.

It belongs to the thymidine/pyrimidine-nucleoside phosphorylase family. As to quaternary structure, homodimer. It depends on K(+) as a cofactor.

It catalyses the reaction uridine + phosphate = alpha-D-ribose 1-phosphate + uracil. The catalysed reaction is thymidine + phosphate = 2-deoxy-alpha-D-ribose 1-phosphate + thymine. The enzyme catalyses 2'-deoxyuridine + phosphate = 2-deoxy-alpha-D-ribose 1-phosphate + uracil. Its function is as follows. Catalyzes phosphorolysis of the pyrimidine nucleosides uridine, thymidine and 2'-deoxyuridine with the formation of the corresponding pyrimidine base and ribose-1-phosphate. The sequence is that of Pyrimidine-nucleoside phosphorylase (pdp) from Staphylococcus epidermidis (strain ATCC 12228 / FDA PCI 1200).